The following is a 342-amino-acid chain: DNA primase small subunit PriS (342 aa).

Residues Asp97, Asp99, and Asp276 contribute to the active site.

It belongs to the eukaryotic-type primase small subunit family. In terms of assembly, heterodimer of a small subunit (PriS) and a large subunit (PriL). Mg(2+) is required as a cofactor. Requires Mn(2+) as cofactor.

Catalytic subunit of DNA primase, an RNA polymerase that catalyzes the synthesis of short RNA molecules used as primers for DNA polymerase during DNA replication. The small subunit contains the primase catalytic core and has DNA synthesis activity on its own. Binding to the large subunit stabilizes and modulates the activity, increasing the rate of DNA synthesis while decreasing the length of the DNA fragments, and conferring RNA synthesis capability. The DNA polymerase activity may enable DNA primase to also catalyze primer extension after primer synthesis. May also play a role in DNA repair. This chain is DNA primase small subunit PriS, found in Thermococcus sibiricus (strain DSM 12597 / MM 739).